The sequence spans 347 residues: D-alanine--D-alanine ligase (347 aa).

The ATP-grasp domain occupies Lys-131 to Asp-333. Glu-161–Glu-216 contributes to the ATP binding site. Mg(2+) contacts are provided by Asp-287, Glu-300, and Asn-302.

Belongs to the D-alanine--D-alanine ligase family. Requires Mg(2+) as cofactor. Mn(2+) is required as a cofactor.

It is found in the cytoplasm. It catalyses the reaction 2 D-alanine + ATP = D-alanyl-D-alanine + ADP + phosphate + H(+). It functions in the pathway cell wall biogenesis; peptidoglycan biosynthesis. Cell wall formation. This is D-alanine--D-alanine ligase from Streptococcus pneumoniae (strain P1031).